Here is an 86-residue protein sequence, read N- to C-terminus: MSFFSFFVGEKKKSASVAKERLQIILAHERSGRNAAEPDYLPALQRELMAVISKYVKINLEDIKVNVERQDDLEVLEVKIELPDSR.

It belongs to the MinE family.

In terms of biological role, prevents the cell division inhibition by proteins MinC and MinD at internal division sites while permitting inhibition at polar sites. This ensures cell division at the proper site by restricting the formation of a division septum at the midpoint of the long axis of the cell. The sequence is that of Cell division topological specificity factor from Albidiferax ferrireducens (strain ATCC BAA-621 / DSM 15236 / T118) (Rhodoferax ferrireducens).